Consider the following 481-residue polypeptide: Zinc metalloproteinase/disintegrin (481 aa).

The N-terminal stretch at 1–20 (MIQVLLVTICLAVFPYQGSS) is a signal peptide. The propeptide occupies 21 to 190 (IILESGNVDD…KASQLYLTPE (170 aa)). A Peptidase M12B domain is found at 197–392 (RYIKLAIVVD…DNPQCILNAP (196 aa)). 3 cysteine pairs are disulfide-bonded: Cys308–Cys387, Cys349–Cys371, and Cys351–Cys354. His333 contacts Zn(2+). Residue Glu334 is part of the active site. Residues His337 and His343 each coordinate Zn(2+). The propeptide occupies 393-408 (LRTDTVSTPVSGNEFL). A Disintegrin domain is found at 400-481 (TPVSGNEFLE…ADCPRNGLYS (82 aa)). Cystine bridges form between Cys414/Cys429, Cys416/Cys424, Cys423/Cys446, Cys437/Cys443, Cys442/Cys467, and Cys455/Cys474. The Cell attachment site signature appears at 459-461 (RGD).

The protein belongs to the venom metalloproteinase (M12B) family. P-II subfamily. P-IIa sub-subfamily. As to quaternary structure, monomer. Requires Zn(2+) as cofactor. In terms of tissue distribution, expressed by the venom gland.

The protein localises to the secreted. In terms of biological role, impairs hemostasis in the envenomed animal. Inhibits platelet aggregation induced by ADP, thrombin, platelet-activating factor and collagen. Acts by inhibiting fibrinogen interaction with platelet receptors GPIIb/GPIIIa (ITGA2B/ITGB3). The chain is Zinc metalloproteinase/disintegrin from Protobothrops elegans (Elegant pitviper).